Reading from the N-terminus, the 443-residue chain is Chromosomal replication initiator protein DnaA (443 aa).

The interval 1-80 (MTSQFASLWQ…LGESVEVRFF (80 aa)) is domain I, interacts with DnaA modulators. Residues 80–104 (FTPSADSRRSEPSRRPVATEESSPP) form a domain II region. The tract at residues 83 to 105 (SADSRRSEPSRRPVATEESSPPL) is disordered. Positions 85-97 (DSRRSEPSRRPVA) are enriched in basic and acidic residues. Residues 105–321 (LLNPKYTFDT…GALNRVIAYA (217 aa)) are domain III, AAA+ region. ATP-binding residues include Gly149, Gly151, Lys152, and Thr153. The interval 322–443 (NLSGKSLTSE…QVLKEKIQRA (122 aa)) is domain IV, binds dsDNA.

It belongs to the DnaA family. In terms of assembly, oligomerizes as a right-handed, spiral filament on DNA at oriC.

Its subcellular location is the cytoplasm. Its function is as follows. Plays an essential role in the initiation and regulation of chromosomal replication. ATP-DnaA binds to the origin of replication (oriC) to initiate formation of the DNA replication initiation complex once per cell cycle. Binds the DnaA box (a 9 base pair repeat at the origin) and separates the double-stranded (ds)DNA. Forms a right-handed helical filament on oriC DNA; dsDNA binds to the exterior of the filament while single-stranded (ss)DNA is stabiized in the filament's interior. The ATP-DnaA-oriC complex binds and stabilizes one strand of the AT-rich DNA unwinding element (DUE), permitting loading of DNA polymerase. After initiation quickly degrades to an ADP-DnaA complex that is not apt for DNA replication. Binds acidic phospholipids. This chain is Chromosomal replication initiator protein DnaA, found in Heliobacterium modesticaldum (strain ATCC 51547 / Ice1).